Consider the following 239-residue polypeptide: Transcriptional regulatory protein BtsR (239 aa).

Residues 3–116 (KVLIVDDEPL…RLEKTLHRLR (114 aa)) form the Response regulatory domain. Aspartate 54 is subject to 4-aspartylphosphate. Positions 137–239 (IPCTGHSRIY…LKSLKEAIGL (103 aa)) constitute an HTH LytTR-type domain.

Phosphorylated by BtsS.

Its function is as follows. Member of the two-component regulatory system BtsS/BtsR. BtsR regulates expression of btsT by binding to its promoter region. This chain is Transcriptional regulatory protein BtsR, found in Salmonella typhi.